Reading from the N-terminus, the 161-residue chain is SsrA-binding protein (161 aa).

The interval 1–23 (MATKKNEQIKGRTDGLVAENRRS) is disordered.

The protein belongs to the SmpB family.

The protein localises to the cytoplasm. In terms of biological role, required for rescue of stalled ribosomes mediated by trans-translation. Binds to transfer-messenger RNA (tmRNA), required for stable association of tmRNA with ribosomes. tmRNA and SmpB together mimic tRNA shape, replacing the anticodon stem-loop with SmpB. tmRNA is encoded by the ssrA gene; the 2 termini fold to resemble tRNA(Ala) and it encodes a 'tag peptide', a short internal open reading frame. During trans-translation Ala-aminoacylated tmRNA acts like a tRNA, entering the A-site of stalled ribosomes, displacing the stalled mRNA. The ribosome then switches to translate the ORF on the tmRNA; the nascent peptide is terminated with the 'tag peptide' encoded by the tmRNA and targeted for degradation. The ribosome is freed to recommence translation, which seems to be the essential function of trans-translation. The protein is SsrA-binding protein of Hyphomonas neptunium (strain ATCC 15444).